The following is a 164-amino-acid chain: LWamide neuropeptides (164 aa).

The propeptide occupies 1-6; that stretch reads RSADAQ. The disordered stretch occupies residues 1-92; it reads RSADAQQHGL…WGRSADAQQP (92 aa). Tryptophan amide occurs at positions 11 and 20. A propeptide spanning residues 23–27 is cleaved from the precursor; that stretch reads SADAQ. A tryptophan amide mark is found at Trp32 and Trp41. Residues 44–49 constitute a propeptide that is removed on maturation; the sequence is SAEPGQ. Tryptophan amide occurs at positions 53 and 62. A propeptide spanning residues 65–70 is cleaved from the precursor; sequence SAEPLQ. Residues Trp74 and Trp83 each carry the tryptophan amide modification. Residues 86-90 constitute a propeptide that is removed on maturation; the sequence is SADAQ. 3 positions are modified to tryptophan amide: Trp95, Trp106, and Trp115. A propeptide spanning residues 118–123 is cleaved from the precursor; it reads SADPGQ. Tryptophan amide is present on residues Trp127 and Trp137. Positions 140–164 are excised as a propeptide; it reads SYEPPQFEDLEDLKKKSAIPKPSEQ.

Belongs to the LWamide neuropeptide family.

The protein localises to the secreted. Metamorphosin A may be part of an internal signaling system involved in control of metamorphosis. The polypeptide is LWamide neuropeptides (Actinia equina (Beadlet anemone)).